Here is a 300-residue protein sequence, read N- to C-terminus: tRNA U34 carboxymethyltransferase (300 aa).

Carboxy-S-adenosyl-L-methionine contacts are provided by residues K73, W87, K92, G111, D133–S135, V160–E161, Y180, and R293.

Belongs to the class I-like SAM-binding methyltransferase superfamily. CmoB family. In terms of assembly, homotetramer.

The catalysed reaction is carboxy-S-adenosyl-L-methionine + 5-hydroxyuridine(34) in tRNA = 5-carboxymethoxyuridine(34) in tRNA + S-adenosyl-L-homocysteine + H(+). Catalyzes carboxymethyl transfer from carboxy-S-adenosyl-L-methionine (Cx-SAM) to 5-hydroxyuridine (ho5U) to form 5-carboxymethoxyuridine (cmo5U) at position 34 in tRNAs. This chain is tRNA U34 carboxymethyltransferase, found in Nautilia profundicola (strain ATCC BAA-1463 / DSM 18972 / AmH).